A 122-amino-acid chain; its full sequence is Small ribosomal subunit protein bS6 (122 aa).

The tract at residues 96 to 122 (ETAPSPMMKAVQKEDAAKSHRTEAPAA) is disordered. Over residues 106-122 (VQKEDAAKSHRTEAPAA) the composition is skewed to basic and acidic residues.

This sequence belongs to the bacterial ribosomal protein bS6 family.

Binds together with bS18 to 16S ribosomal RNA. In Herminiimonas arsenicoxydans, this protein is Small ribosomal subunit protein bS6.